A 184-amino-acid chain; its full sequence is Ferredoxin-thioredoxin reductase subunit A2, chloroplastic (184 aa).

The N-terminal 71 residues, 1–71 (MTNSYALSPA…SRKNPKSTIR (71 aa)), are a transit peptide targeting the chloroplast.

It belongs to the ferredoxin thioredoxin reductase alpha subunit family. Heterodimer of subunit A (variable subunit) and subunit B (catalytic subunit). Heterodimeric FTR forms a complex with ferredoxin and thioredoxin.

The protein resides in the plastid. Its subcellular location is the chloroplast. Its function is as follows. Variable subunit of the ferredoxin-thioredoxin reductase (FTR), which catalyzes the two-electron reduction of thioredoxins by the electrons provided by reduced ferredoxin. The sequence is that of Ferredoxin-thioredoxin reductase subunit A2, chloroplastic from Arabidopsis thaliana (Mouse-ear cress).